Consider the following 161-residue polypeptide: 3-hydroxyacyl-[acyl-carrier-protein] dehydratase FabZ (161 aa).

The active site involves His64.

The protein belongs to the thioester dehydratase family. FabZ subfamily.

It is found in the cytoplasm. It catalyses the reaction a (3R)-hydroxyacyl-[ACP] = a (2E)-enoyl-[ACP] + H2O. Its function is as follows. Involved in unsaturated fatty acids biosynthesis. Catalyzes the dehydration of short chain beta-hydroxyacyl-ACPs and long chain saturated and unsaturated beta-hydroxyacyl-ACPs. In Paramagnetospirillum magneticum (strain ATCC 700264 / AMB-1) (Magnetospirillum magneticum), this protein is 3-hydroxyacyl-[acyl-carrier-protein] dehydratase FabZ.